The sequence spans 101 residues: NAD(P)H-quinone oxidoreductase subunit 4L, chloroplastic (101 aa).

3 helical membrane-spanning segments follow: residues 2–22, 32–52, and 61–81; these read IFEH…YGLI, MCLE…SDFF, and IFSI…PAIV.

It belongs to the complex I subunit 4L family. As to quaternary structure, NDH is composed of at least 16 different subunits, 5 of which are encoded in the nucleus.

Its subcellular location is the plastid. It localises to the chloroplast thylakoid membrane. It catalyses the reaction a plastoquinone + NADH + (n+1) H(+)(in) = a plastoquinol + NAD(+) + n H(+)(out). The catalysed reaction is a plastoquinone + NADPH + (n+1) H(+)(in) = a plastoquinol + NADP(+) + n H(+)(out). NDH shuttles electrons from NAD(P)H:plastoquinone, via FMN and iron-sulfur (Fe-S) centers, to quinones in the photosynthetic chain and possibly in a chloroplast respiratory chain. The immediate electron acceptor for the enzyme in this species is believed to be plastoquinone. Couples the redox reaction to proton translocation, and thus conserves the redox energy in a proton gradient. The protein is NAD(P)H-quinone oxidoreductase subunit 4L, chloroplastic of Glycine max (Soybean).